A 437-amino-acid polypeptide reads, in one-letter code: Methylenetetrahydrofolate--tRNA-(uracil-5-)-methyltransferase TrmFO (437 aa).

FAD is bound at residue 10 to 15; the sequence is GAGLAG.

This sequence belongs to the MnmG family. TrmFO subfamily. Requires FAD as cofactor.

The protein resides in the cytoplasm. It carries out the reaction uridine(54) in tRNA + (6R)-5,10-methylene-5,6,7,8-tetrahydrofolate + NADH + H(+) = 5-methyluridine(54) in tRNA + (6S)-5,6,7,8-tetrahydrofolate + NAD(+). The catalysed reaction is uridine(54) in tRNA + (6R)-5,10-methylene-5,6,7,8-tetrahydrofolate + NADPH + H(+) = 5-methyluridine(54) in tRNA + (6S)-5,6,7,8-tetrahydrofolate + NADP(+). Catalyzes the folate-dependent formation of 5-methyl-uridine at position 54 (M-5-U54) in all tRNAs. The chain is Methylenetetrahydrofolate--tRNA-(uracil-5-)-methyltransferase TrmFO from Lysinibacillus sphaericus (strain C3-41).